Reading from the N-terminus, the 218-residue chain is Ribose-5-phosphate isomerase A (218 aa).

Residues 28-31 (SGST), 81-84 (DGAD), and 94-97 (KGGG) each bind substrate. The active-site Proton acceptor is glutamate 103. Substrate is bound at residue lysine 121.

Belongs to the ribose 5-phosphate isomerase family. As to quaternary structure, homodimer.

The enzyme catalyses aldehydo-D-ribose 5-phosphate = D-ribulose 5-phosphate. It participates in carbohydrate degradation; pentose phosphate pathway; D-ribose 5-phosphate from D-ribulose 5-phosphate (non-oxidative stage): step 1/1. Catalyzes the reversible conversion of ribose-5-phosphate to ribulose 5-phosphate. This is Ribose-5-phosphate isomerase A from Dichelobacter nodosus (strain VCS1703A).